An 807-amino-acid polypeptide reads, in one-letter code: Centrosomal protein of 97 kDa (807 aa).

LRR repeat units follow at residues 34–55 (DTQT…EKCR), 56–77 (NLVQ…AKLI), 78–99 (HLRV…KDLV), 100–121 (HLEW…NSST), 122–143 (SLQH…SKLK), 144–165 (SLKT…SACL), and 168–189 (SLTI…AFLA). Positions 208–246 (TPSIPGFDYRPFIVSWCLNLKVLDGYVVSQKESLKAEWL) constitute an LRRCT domain. Residues 306–330 (RSDGYLTSSTPNKRLPLSTEHHSPT) are disordered. Positions 519 to 548 (ISKAATKLQSCWRGFYARKYNPKVKDVCYE) constitute an IQ domain. A compositionally biased stretch (polar residues) spans 607–623 (TANSSENDLPSASNSKH). Residues 607 to 756 (TANSSENDLP…RPEITTCSDN (150 aa)) form a disordered region. Over residues 681 to 690 (TGRHYNDKVP) the composition is skewed to basic and acidic residues. The segment covering 704–724 (SQSSKDSFTSEQDSSLLQQYL) has biased composition (polar residues).

The protein localises to the cytoplasm. It localises to the cytoskeleton. The protein resides in the microtubule organizing center. It is found in the centrosome. Its function is as follows. Acts as a key negative regulator of ciliogenesis in collaboration with ccp110 by capping the mother centriole thereby preventing cilia formation. Required for recruitment of ccp110 to the centrosome. This Xenopus laevis (African clawed frog) protein is Centrosomal protein of 97 kDa (cep97).